The following is a 132-amino-acid chain: UPF0292 protein PYRAB04740 (132 aa).

A Toprim domain is found at 20 to 100; it reads DGAIIVEGPR…KVDTETRRSL (81 aa). 3 residues coordinate Mg(2+): glutamate 26, aspartate 69, and aspartate 71.

This sequence belongs to the UPF0292 family. Mg(2+) is required as a cofactor.

This Pyrococcus abyssi (strain GE5 / Orsay) protein is UPF0292 protein PYRAB04740.